The following is a 336-amino-acid chain: Dihydroorotate dehydrogenase (quinone) (336 aa).

Residues 62–66 (AGLDK) and Thr86 each bind FMN. Lys66 lines the substrate pocket. 111–115 (NRFGF) provides a ligand contact to substrate. FMN-binding residues include Asn139 and Asn172. Residue Asn172 participates in substrate binding. The Nucleophile role is filled by Ser175. Position 177 (Asn177) interacts with substrate. Residues Lys217 and Thr245 each coordinate FMN. 246–247 (NT) contributes to the substrate binding site. FMN-binding positions include Gly268, Gly297, and 318-319 (YS).

The protein belongs to the dihydroorotate dehydrogenase family. Type 2 subfamily. Monomer. It depends on FMN as a cofactor.

Its subcellular location is the cell membrane. It catalyses the reaction (S)-dihydroorotate + a quinone = orotate + a quinol. Its pathway is pyrimidine metabolism; UMP biosynthesis via de novo pathway; orotate from (S)-dihydroorotate (quinone route): step 1/1. Its function is as follows. Catalyzes the conversion of dihydroorotate to orotate with quinone as electron acceptor. This chain is Dihydroorotate dehydrogenase (quinone), found in Photobacterium profundum (strain SS9).